Reading from the N-terminus, the 508-residue chain is Bifunctional purine biosynthesis protein PurH (508 aa).

The region spanning 1-145 (MAKKALISVS…KNYKYVTILV (145 aa)) is the MGS-like domain.

Belongs to the PurH family.

The enzyme catalyses (6R)-10-formyltetrahydrofolate + 5-amino-1-(5-phospho-beta-D-ribosyl)imidazole-4-carboxamide = 5-formamido-1-(5-phospho-D-ribosyl)imidazole-4-carboxamide + (6S)-5,6,7,8-tetrahydrofolate. It catalyses the reaction IMP + H2O = 5-formamido-1-(5-phospho-D-ribosyl)imidazole-4-carboxamide. It participates in purine metabolism; IMP biosynthesis via de novo pathway; 5-formamido-1-(5-phospho-D-ribosyl)imidazole-4-carboxamide from 5-amino-1-(5-phospho-D-ribosyl)imidazole-4-carboxamide (10-formyl THF route): step 1/1. The protein operates within purine metabolism; IMP biosynthesis via de novo pathway; IMP from 5-formamido-1-(5-phospho-D-ribosyl)imidazole-4-carboxamide: step 1/1. This Thermoanaerobacter sp. (strain X514) protein is Bifunctional purine biosynthesis protein PurH.